Consider the following 155-residue polypeptide: SsrA-binding protein (155 aa).

Residues 127-149 (KKDYDKRNDMRKKEAKREMERTF) show a composition bias toward basic and acidic residues. Positions 127-155 (KKDYDKRNDMRKKEAKREMERTFKSKNQY) are disordered.

It belongs to the SmpB family.

The protein localises to the cytoplasm. In terms of biological role, required for rescue of stalled ribosomes mediated by trans-translation. Binds to transfer-messenger RNA (tmRNA), required for stable association of tmRNA with ribosomes. tmRNA and SmpB together mimic tRNA shape, replacing the anticodon stem-loop with SmpB. tmRNA is encoded by the ssrA gene; the 2 termini fold to resemble tRNA(Ala) and it encodes a 'tag peptide', a short internal open reading frame. During trans-translation Ala-aminoacylated tmRNA acts like a tRNA, entering the A-site of stalled ribosomes, displacing the stalled mRNA. The ribosome then switches to translate the ORF on the tmRNA; the nascent peptide is terminated with the 'tag peptide' encoded by the tmRNA and targeted for degradation. The ribosome is freed to recommence translation, which seems to be the essential function of trans-translation. This is SsrA-binding protein from Lysinibacillus sphaericus (strain C3-41).